The primary structure comprises 644 residues: Probable lysophospholipase 2 (644 aa).

The signal sequence occupies residues 1–19 (MYFQSFYFLALLLATAVYG). Asparagine 44, asparagine 96, asparagine 141, asparagine 178, asparagine 221, asparagine 245, asparagine 253, asparagine 281, asparagine 286, asparagine 316, asparagine 319, asparagine 373, asparagine 393, asparagine 449, asparagine 501, asparagine 558, asparagine 579, and asparagine 596 each carry an N-linked (GlcNAc...) asparagine glycan. The PLA2c domain occupies 53 to 600 (SCDSSEIMVN…SQYCWNGTVD (548 aa)).

Belongs to the lysophospholipase family.

Its subcellular location is the secreted. It carries out the reaction a 1-acyl-sn-glycero-3-phosphocholine + H2O = sn-glycerol 3-phosphocholine + a fatty acid + H(+). Its function is as follows. Catalyzes the release of fatty acids from lysophospholipids. The protein is Probable lysophospholipase 2 (plb2) of Schizosaccharomyces pombe (strain 972 / ATCC 24843) (Fission yeast).